Consider the following 553-residue polypeptide: Methionine--tRNA ligase (553 aa).

The 'HIGH' region motif lies at 12–22 (PYANSQLHLGH). Residues cysteine 144, cysteine 147, cysteine 157, and cysteine 160 each coordinate Zn(2+). The 'KMSKS' region signature appears at 332–336 (KFSKS). Lysine 335 serves as a coordination point for ATP.

This sequence belongs to the class-I aminoacyl-tRNA synthetase family. MetG type 1 subfamily. In terms of assembly, monomer. Zn(2+) is required as a cofactor.

It localises to the cytoplasm. It catalyses the reaction tRNA(Met) + L-methionine + ATP = L-methionyl-tRNA(Met) + AMP + diphosphate. In terms of biological role, is required not only for elongation of protein synthesis but also for the initiation of all mRNA translation through initiator tRNA(fMet) aminoacylation. This Dehalococcoides mccartyi (strain CBDB1) protein is Methionine--tRNA ligase.